The primary structure comprises 398 residues: Large ribosomal subunit protein uL3 (398 aa).

Positions 1–10 (MSHRKFEAPR) are enriched in basic and acidic residues. A disordered region spans residues 1–34 (MSHRKFEAPRHGNLGFRPRKRAARHQGKVKSFPK). Residues 17-28 (RPRKRAARHQGK) show a composition bias toward basic residues.

It belongs to the universal ribosomal protein uL3 family.

It localises to the cytoplasm. Functionally, the L3 protein is a component of the large subunit of cytoplasmic ribosomes. This Dictyostelium discoideum (Social amoeba) protein is Large ribosomal subunit protein uL3 (rpl3).